The chain runs to 989 residues: ATP-dependent 6-phosphofructokinase subunit alpha (989 aa).

Residues 1–585 (MPEPSISDLS…SYENFLSVSK (585 aa)) form an N-terminal catalytic PFK domain 1 region. Residues glycine 220, 283 to 284 (RC), and 313 to 316 (GDGS) contribute to the ATP site. Aspartate 314 provides a ligand contact to Mg(2+). Residues 359–361 (SID), arginine 396, 403–405 (MGR), glutamate 460, arginine 487, and 493–496 (HVQR) contribute to the beta-D-fructose 6-phosphate site. Aspartate 361 functions as the Proton acceptor in the catalytic mechanism. The interdomain linker stretch occupies residues 586–599 (YDDGSYLVPESSRL). The C-terminal regulatory PFK domain 2 stretch occupies residues 600–989 (NIAIIHVGAP…LSGRLSIRTT (390 aa)). Beta-D-fructose 2,6-bisphosphate is bound by residues arginine 670, 727-731 (TVSNN), arginine 765, 772-774 (QGG), glutamate 832, arginine 858, 864-867 (HVQQ), and arginine 963.

The protein belongs to the phosphofructokinase type A (PFKA) family. ATP-dependent PFK group I subfamily. Eukaryotic two domain clade 'E' sub-subfamily. In terms of assembly, heterododecamer of 4 alpha, 4 beta and 4 gamma chains. It depends on Mg(2+) as a cofactor.

It localises to the cytoplasm. It carries out the reaction beta-D-fructose 6-phosphate + ATP = beta-D-fructose 1,6-bisphosphate + ADP + H(+). The protein operates within carbohydrate degradation; glycolysis; D-glyceraldehyde 3-phosphate and glycerone phosphate from D-glucose: step 3/4. Its activity is regulated as follows. Allosterically activated by ADP, AMP, or fructose 2,6-bisphosphate, and allosterically inhibited by ATP or citrate. Catalyzes the phosphorylation of D-fructose 6-phosphate to fructose 1,6-bisphosphate by ATP, the first committing step of glycolysis. The protein is ATP-dependent 6-phosphofructokinase subunit alpha (PFK1) of Komagataella pastoris (Yeast).